A 260-amino-acid polypeptide reads, in one-letter code: Acetylglutamate kinase (260 aa).

Substrate-binding positions include 46-47 (GG), Arg-68, and Asn-160.

This sequence belongs to the acetylglutamate kinase family. ArgB subfamily.

The protein localises to the cytoplasm. The catalysed reaction is N-acetyl-L-glutamate + ATP = N-acetyl-L-glutamyl 5-phosphate + ADP. It functions in the pathway amino-acid biosynthesis; L-arginine biosynthesis; N(2)-acetyl-L-ornithine from L-glutamate: step 2/4. Functionally, catalyzes the ATP-dependent phosphorylation of N-acetyl-L-glutamate. The polypeptide is Acetylglutamate kinase (Shewanella sp. (strain ANA-3)).